Here is a 641-residue protein sequence, read N- to C-terminus: Phosphomethylpyrimidine synthase (641 aa).

Positions 1–13 (MNIRSNPDTTRPA) are enriched in polar residues. Positions 1-21 (MNIRSNPDTTRPAVTTGGLPS) are disordered. Substrate-binding positions include Asn221, Met250, Tyr279, His315, 335–337 (SRG), 376–379 (DGLR), and Glu415. Position 419 (His419) interacts with Zn(2+). Substrate is bound at residue Tyr442. His483 contributes to the Zn(2+) binding site. Residues Cys563, Cys566, and Cys571 each contribute to the [4Fe-4S] cluster site.

The protein belongs to the ThiC family. As to quaternary structure, homodimer. [4Fe-4S] cluster serves as cofactor.

It catalyses the reaction 5-amino-1-(5-phospho-beta-D-ribosyl)imidazole + S-adenosyl-L-methionine = 4-amino-2-methyl-5-(phosphooxymethyl)pyrimidine + CO + 5'-deoxyadenosine + formate + L-methionine + 3 H(+). Its pathway is cofactor biosynthesis; thiamine diphosphate biosynthesis. Functionally, catalyzes the synthesis of the hydroxymethylpyrimidine phosphate (HMP-P) moiety of thiamine from aminoimidazole ribotide (AIR) in a radical S-adenosyl-L-methionine (SAM)-dependent reaction. The sequence is that of Phosphomethylpyrimidine synthase from Rhodopseudomonas palustris (strain BisB5).